Consider the following 1317-residue polypeptide: Nucleoporin NUP145 (1317 aa).

Polar residues predominate over residues 1–16 (MFNKSVNSGFTFGNQN). Residues 1–36 (MFNKSVNSGFTFGNQNTSTPTSTPAQPSSSLQFPQK) form a disordered region. An FG 1 repeat occupies 12-13 (FG). Over residues 17-30 (TSTPTSTPAQPSSS) the composition is skewed to low complexity. Residues 39 to 42 (GLFG) form a GLFG 1 repeat. One copy of the FG 2 repeat lies at 79-80 (FG). The GLFG 2 repeat unit spans residues 89–92 (GLFG). The stretch at 106 to 107 (FG) is one FG 3 repeat. Residues 133–165 (QNGGLFGNSNNNNITSTTQNGGLFGKPTTTPAG) form a disordered region. GLFG repeat units lie at residues 136–139 (GLFG), 154–157 (GLFG), 168–171 (GLFG), and 181–184 (GLFG). The segment covering 139–164 (GNSNNNNITSTTQNGGLFGKPTTTPA) has biased composition (low complexity). The stretch at 193–196 (GIFG) is one GLFG 7; approximate repeat. Residues 206 to 209 (GLFG) form a GLFG 8 repeat. A disordered region spans residues 249–278 (TSSLSDVNGKSDAEPKPIENRRTYSFSSSV). Over residues 257-270 (GKSDAEPKPIENRR) the composition is skewed to basic and acidic residues. Position 273 is a phosphoserine (serine 273). A Bipartite nuclear localization signal motif is present at residues 369-385 (RKLKIDSNRSAAKKLKL). The interval 390–450 (PAITKKHMQD…NLNKQDGENT (61 aa)) is disordered. The required for autocatalytic cleavage stretch occupies residues 398-523 (QDEQDSSENE…FGKIVIFRSS (126 aa)). Residues serine 403, serine 404, and serine 414 each carry the phosphoserine modification. Residues 418-427 (IDRKENRDNN) are compositionally biased toward basic and acidic residues. Over residues 428-444 (LDNTYLNGKEQSNNLNK) the composition is skewed to polar residues. Positions 458–605 (SFGYWCSPSP…GTWTFKVNHF (148 aa)) constitute a Peptidase S59 domain. The interval 460-604 (GYWCSPSPEQ…GGTWTFKVNH (145 aa)) is nucleoporin RNA-binding motif (NRM). A phosphoserine mark is found at serine 667, serine 679, and serine 689. Threonine 751 is modified (phosphothreonine).

It belongs to the nucleoporin GLFG family. Component of the nuclear pore complex (NPC). NPC constitutes the exclusive means of nucleocytoplasmic transport. NPCs allow the passive diffusion of ions and small molecules and the active, nuclear transport receptor-mediated bidirectional transport of macromolecules such as proteins, RNAs, ribonucleoparticles (RNPs), and ribosomal subunits across the nuclear envelope. Due to its 8-fold rotational symmetry, all subunits are present with 8 copies or multiples thereof. NUP145C is part of the heptameric 0.5 MDa autoassembling NUP84 NPC subcomplex (NUP84, NUP85, NUP120, NUP133, NUP145C, SEC13 and SEH1). NUP145N may bind homomeric RNA and interacts through its FG repeats with karyopherins. Interacts with MLP1 and MLP2. In terms of processing, NUP145 is autocatalytically cleaved in NUP145N and NUP145C.

It localises to the nucleus. It is found in the nuclear pore complex. The protein localises to the nucleus membrane. In terms of biological role, functions as a component of the nuclear pore complex (NPC). NPC components, collectively referred to as nucleoporins (NUPs), can play the role of both NPC structural components and of docking or interaction partners for transiently associated nuclear transport factors. Active directional transport is assured by both, a Phe-Gly (FG) repeat affinity gradient for these transport factors across the NPC and a transport cofactor concentration gradient across the nuclear envelope (GSP1 and GSP2 GTPases associated predominantly with GTP in the nucleus, with GDP in the cytoplasm). NUP145 is autocatalytically cleaved in vivo in 2 polypeptides which assume different functions in the NPC. NUP145N as one of the FG repeat nucleoporins participates in karyopherin interactions and contains part of the autocatalytic cleavage activity. NUP145C as part of the NUP84 complex is involved in nuclear poly(A)+ RNA and tRNA export. It is also required for normal NPC distribution (probably through interactions with MLP1 and MLP2) and NPC assembly, as well as for normal nuclear envelope organization. This Saccharomyces cerevisiae (strain ATCC 204508 / S288c) (Baker's yeast) protein is Nucleoporin NUP145 (NUP145).